The sequence spans 336 residues: Dihydroorotate dehydrogenase (quinone) (336 aa).

FMN is bound by residues 62–66 (AGLDK) and T86. Residue K66 participates in substrate binding. 111 to 115 (NRMGF) is a binding site for substrate. The FMN site is built by N139 and N172. A substrate-binding site is contributed by N172. The active-site Nucleophile is the S175. N177 contacts substrate. The FMN site is built by K217 and T245. 246–247 (NT) is a binding site for substrate. FMN-binding positions include G268, G297, and 318-319 (YS).

Belongs to the dihydroorotate dehydrogenase family. Type 2 subfamily. As to quaternary structure, monomer. Requires FMN as cofactor.

The protein resides in the cell membrane. It carries out the reaction (S)-dihydroorotate + a quinone = orotate + a quinol. It participates in pyrimidine metabolism; UMP biosynthesis via de novo pathway; orotate from (S)-dihydroorotate (quinone route): step 1/1. Its function is as follows. Catalyzes the conversion of dihydroorotate to orotate with quinone as electron acceptor. The chain is Dihydroorotate dehydrogenase (quinone) from Edwardsiella ictaluri (strain 93-146).